The sequence spans 507 residues: Dolichyl pyrophosphate Man9GlcNAc2 alpha-1,3-glucosyltransferase (507 aa).

Residues 1-2 (ME) lie on the Cytoplasmic side of the membrane. Residues 3-23 (SWTWMTVVVLLGLTVRWTVSL) traverse the membrane as a helical segment. Residues 24–114 (NSYSGAGKPP…SQAHKLFMRT (91 aa)) are Lumenal-facing. N-linked (GlcNAc...) asparagine glycosylation occurs at N59. A helical membrane pass occupies residues 115–135 (TVLAADLLIYIPAVLLYCYSL). Residues 136 to 143 (KEISPKRK) are Cytoplasmic-facing. Residues 144–164 (IASALCILLYPGLILIDYGHF) form a helical membrane-spanning segment. Residues 165-172 (QYNSVSLG) are Lumenal-facing. A helical membrane pass occupies residues 173 to 193 (FALWGVLGVSCDWDLLGSLAF). Topologically, residues 194 to 229 (CLALNYKQMELYHSLPFFCFLLGKCFKKGLRGKGSA) are cytoplasmic. A helical membrane pass occupies residues 230–250 (LFIRIACTVVASFLLCWLPFL). Topologically, residues 251 to 297 (TEREHALQVVRRLFPVDRGLFEDKVANIWCSLNVFLKIKDILPRHIQ) are lumenal. A helical transmembrane segment spans residues 298 to 318 (IAISFCFTFLSLLPACIKLTV). At 319–332 (QPSAKGFRFTLVSC) the chain is on the cytoplasmic side. The chain crosses the membrane as a helical span at residues 333 to 353 (ALSFFLFSFQVHEKSILLVSL). Topologically, residues 354-361 (PVCLVLTE) are lumenal. Residues 362–382 (IPFMSTWFLLVSTFSMLPLLL) traverse the membrane as a helical segment. The Cytoplasmic segment spans residues 383–385 (KDQ). The helical transmembrane segment at 386–406 (LLLPSVVTVMAFLIACSTFFP) threads the bilayer. Topologically, residues 407–437 (MFENTSEEQLQLKSFAVSVRRHLPGFTFLPR) are lumenal. A helical membrane pass occupies residues 438-458 (IIQCLFLSSVITMILLTILSV). Topologically, residues 459–468 (TLDPPQKLPD) are cytoplasmic. Residues 469 to 489 (LFSVLICFVSCVNFVFFLVYF) traverse the membrane as a helical segment. Over 490-507 (NIVIMWDSKNGRNRKKID) the chain is Lumenal.

This sequence belongs to the ALG6/ALG8 glucosyltransferase family.

The protein localises to the endoplasmic reticulum membrane. The catalysed reaction is an alpha-D-Man-(1-&gt;2)-alpha-D-Man-(1-&gt;2)-alpha-D-Man-(1-&gt;3)-[alpha-D-Man-(1-&gt;2)-alpha-D-Man-(1-&gt;3)-[alpha-D-Man-(1-&gt;2)-alpha-D-Man-(1-&gt;6)]-alpha-D-Man-(1-&gt;6)]-beta-D-Man-(1-&gt;4)-beta-D-GlcNAc-(1-&gt;4)-alpha-D-GlcNAc-diphospho-di-trans,poly-cis-dolichol + a di-trans,poly-cis-dolichyl beta-D-glucosyl phosphate = an alpha-D-Glc-(1-&gt;3)-alpha-D-Man-(1-&gt;2)-alpha-D-Man-(1-&gt;2)-alpha-D-Man-(1-&gt;3)-[alpha-D-Man-(1-&gt;2)-alpha-D-Man-(1-&gt;3)-[alpha-D-Man-(1-&gt;2)-alpha-D-Man-(1-&gt;6)]-alpha-D-Man-(1-&gt;6)]-beta-D-Man-(1-&gt;4)-beta-D-GlcNAc-(1-&gt;4)-alpha-D-GlcNAc-diphospho-di-trans,poly-cis-dolichol + a di-trans,poly-cis-dolichyl phosphate + H(+). Its pathway is protein modification; protein glycosylation. Functionally, dolichyl pyrophosphate Man9GlcNAc2 alpha-1,3-glucosyltransferase that operates in the biosynthetic pathway of dolichol-linked oligosaccharides, the glycan precursors employed in protein asparagine (N)-glycosylation. The assembly of dolichol-linked oligosaccharides begins on the cytosolic side of the endoplasmic reticulum membrane and finishes in its lumen. The sequential addition of sugars to dolichol pyrophosphate produces dolichol-linked oligosaccharides containing fourteen sugars, including two GlcNAcs, nine mannoses and three glucoses. Once assembled, the oligosaccharide is transferred from the lipid to nascent proteins by oligosaccharyltransferases. In the lumen of the endoplasmic reticulum, adds the first glucose residue from dolichyl phosphate glucose (Dol-P-Glc) onto the lipid-linked oligosaccharide intermediate Man(9)GlcNAc(2)-PP-Dol to produce Glc(1)Man(9)GlcNAc(2)-PP-Dol. Glc(1)Man(9)GlcNAc(2)-PP-Dol is a substrate for ALG8, the following enzyme in the biosynthetic pathway. The sequence is that of Dolichyl pyrophosphate Man9GlcNAc2 alpha-1,3-glucosyltransferase from Rattus norvegicus (Rat).